The following is a 363-amino-acid chain: Beta-1,3-N-acetylglucosaminyltransferase lunatic fringe (363 aa).

The Cytoplasmic segment spans residues 1–8 (MLKSCGRK). The chain crosses the membrane as a helical; Signal-anchor for type II membrane protein span at residues 9–29 (LLLSLVGSMFTCLLVLMVEPP). Topologically, residues 30–363 (GRPGLARGEA…TPWCPSNVVY (334 aa)) are lumenal. Position 113 (arginine 113) interacts with substrate. Asparagine 151 carries an N-linked (GlcNAc...) asparagine glycan. Intrachain disulfides connect cysteine 152–cysteine 163 and cysteine 181–cysteine 244. Aspartate 185 contacts substrate. Aspartate 186 contributes to the Mn(2+) binding site. Aspartate 274 is an active-site residue. Histidine 298 serves as a coordination point for Mn(2+). A disulfide bridge connects residues cysteine 348 and cysteine 357.

Belongs to the glycosyltransferase 31 family. The cofactor is Mn(2+). Co(2+) is required as a cofactor. In terms of processing, a soluble form may be derived from the membrane form by proteolytic processing.

It localises to the golgi apparatus membrane. It carries out the reaction 3-O-(alpha-L-fucosyl)-L-threonyl-[EGF-like domain protein] + UDP-N-acetyl-alpha-D-glucosamine = 3-O-(N-acetyl-beta-D-glucosaminyl-(1-&gt;3)-alpha-L-fucosyl)-L-threonyl-[EGF-like domain protein] + UDP + H(+). The enzyme catalyses 3-O-(alpha-L-fucosyl)-L-seryl-[EGF-like domain protein] + UDP-N-acetyl-alpha-D-glucosamine = 3-O-(N-acetyl-beta-D-glucosaminyl-(1-&gt;3)-alpha-L-fucosyl)-L-seryl-[EGF-like domain protein] + UDP + H(+). In terms of biological role, glycosyltransferase that initiates the elongation of O-linked fucose residues attached to EGF-like repeats in the extracellular domain of Notch molecules. Essential mediator of somite segmentation and patterning. The sequence is that of Beta-1,3-N-acetylglucosaminyltransferase lunatic fringe (LFNG) from Gallus gallus (Chicken).